The primary structure comprises 302 residues: Cell division protein FtsQ (302 aa).

Positions 1–41 are disordered; sequence MPAVVRGGPPKPRRPRAEAPASPSKGKPAPRKAQPAAKLHA. Residues 1–50 are Cytoplasmic-facing; that stretch reads MPAVVRGGPPKPRRPRAEAPASPSKGKPAPRKAQPAAKLHAARGVGLSPT. A compositionally biased stretch (low complexity) spans 18–38; it reads EAPASPSKGKPAPRKAQPAAK. The helical transmembrane segment at 51 to 71 threads the bilayer; that stretch reads VALSVAGAALGLGLVVMLATG. Residues 72-302 lie on the Periplasmic side of the membrane; the sequence is HRAERLGASM…LPGQPAADGA (231 aa). In terms of domain architecture, POTRA spans 94 to 162; sequence FRLKTVHIRG…DTVLIAVEER (69 aa).

Belongs to the FtsQ/DivIB family. FtsQ subfamily.

The protein localises to the cell inner membrane. Its function is as follows. Essential cell division protein. This is Cell division protein FtsQ from Caulobacter vibrioides (strain ATCC 19089 / CIP 103742 / CB 15) (Caulobacter crescentus).